Here is a 396-residue protein sequence, read N- to C-terminus: Flavohemoprotein (396 aa).

A Globin domain is found at M1–A136. A heme b-binding site is contributed by H85. Residues Y95 and E135 each act as charge relay system in the active site. Residues G147–L396 form a reductase region. The 106-residue stretch at E150–N255 folds into the FAD-binding FR-type domain. Residues Y188 and R204–S207 each bind FAD. G268–P273 lines the NADP(+) pocket. C389–P392 provides a ligand contact to FAD.

Belongs to the globin family. Two-domain flavohemoproteins subfamily. This sequence in the C-terminal section; belongs to the flavoprotein pyridine nucleotide cytochrome reductase family. As to quaternary structure, monomer. The cofactor is heme b. FAD is required as a cofactor.

The enzyme catalyses 2 nitric oxide + NADPH + 2 O2 = 2 nitrate + NADP(+) + H(+). It catalyses the reaction 2 nitric oxide + NADH + 2 O2 = 2 nitrate + NAD(+) + H(+). Functionally, is involved in NO detoxification in an aerobic process, termed nitric oxide dioxygenase (NOD) reaction that utilizes O(2) and NAD(P)H to convert NO to nitrate, which protects the bacterium from various noxious nitrogen compounds. Therefore, plays a central role in the inducible response to nitrosative stress. This Salmonella typhimurium (strain LT2 / SGSC1412 / ATCC 700720) protein is Flavohemoprotein (hmp).